Here is a 1479-residue protein sequence, read N- to C-terminus: Tyrosine-protein kinase BAZ1B (1479 aa).

Residues 20 to 126 enclose the WAC domain; sequence EPLFTIPHTQ…GEECDFEVGK (107 aa). Positions 146–212 are disordered; sequence EAVEKKSDGA…TSLKKGERKW (67 aa). 2 stretches are compositionally biased toward basic and acidic residues: residues 148-165 and 173-195; these read VEKKSDGACDSPSSDKEN and LQKKETVVKEDEGRRESINDRAR. Phosphoserine occurs at positions 152, 158, and 161. The short motif at 207 to 213 is the C motif element; it reads KGERKWA. Threonine 266 is subject to Phosphothreonine. The tract at residues 302-333 is disordered; it reads NPSTKRRNTGSPDRKPSKKPKRDSSSLSSPLN. Residues serine 325, serine 330, serine 345, serine 361, and serine 374 each carry the phosphoserine modification. 2 disordered regions span residues 376–433 and 448–472; these read NNNK…KTPK and TQKMTRTPRSSGGVPRSSGKPHKHL. The span at 381–396 shows a compositional bias: basic residues; sequence HSFHIPKKGPAAKKPG. The span at 415 to 425 shows a compositional bias: polar residues; that stretch reads GQKSTGNSKSP. The span at 454–465 shows a compositional bias: low complexity; it reads TPRSSGGVPRSS. The stretch at 537 to 587 forms a coiled coil; sequence ASMSEEQRKEYLKKKRQELKERLREKAKERREREMLERLEKQKRFEDQELG. One can recognise a DDT domain in the interval 605-669; the sequence is NTLFGDVALV…LQTLLQDEIA (65 aa). Serine 706, serine 709, and serine 717 each carry phosphoserine. The stretch at 774 to 809 forms a coiled coil; sequence SAELWKERLAVLKEENDKKRAEKQKRKEMEARNKEN. A disordered region spans residues 789–813; it reads NDKKRAEKQKRKEMEARNKENGKEE. Lysine 827 participates in a covalent cross-link: Glycyl lysine isopeptide (Lys-Gly) (interchain with G-Cter in SUMO1); alternate. Residue lysine 827 forms a Glycyl lysine isopeptide (Lys-Gly) (interchain with G-Cter in SUMO2); alternate linkage. Residues lysine 854, lysine 1043, lysine 1089, and lysine 1107 each participate in a glycyl lysine isopeptide (Lys-Gly) (interchain with G-Cter in SUMO2) cross-link. Residues 854–890 adopt a coiled-coil conformation; sequence KRKREIQERETKVRLEREAEEERMRKHKAAAEKAFQE. A PHD-type zinc finger spans residues 1184 to 1234; sequence NARCKVCRKKGEDDKLILCDECNKAFHLFCLRPALYEVPDGEWQCPACQPP. Residues 1231 to 1324 are disordered; it reads CQPPTARRNS…SRPKDDPEVD (94 aa). The span at 1254–1277 shows a compositional bias: acidic residues; that stretch reads SEGDESGEEEEEEEEEEEEEEDYE. The stretch at 1257–1284 forms a coiled coil; it reads DESGEEEEEEEEEEEEEEDYEVAGLRLR. Positions 1305-1316 are enriched in basic residues; the sequence is PGKKSHPARRSR. Serine 1315 is subject to Phosphoserine. Lysine 1331 carries the N6-acetyllysine modification. The 105-residue stretch at 1335-1439 folds into the Bromo domain; that stretch reads RRQSLELQKC…QCLLALLQKH (105 aa). Serine 1338, serine 1464, serine 1466, and serine 1468 each carry phosphoserine. Residues 1451–1479 are disordered; sequence RKFPDRLADDEGDSDSESVGQSRGRRQKK.

Belongs to the WAL family. BAZ1B subfamily. Component of the WICH-1 ISWI chromatin remodeling complex, at least composed of SMARCA1 and BAZ1B/WSTF, which regulates the spacing of histone octamers on the DNA template to facilitate access to DNA. Within the WICH-1 ISWI chromatin remodeling complex interacts with SMARCA1; the interaction is direct. Component of the WICH-5 ISWI chromatin remodeling complex (also called the WICH complex), at least composed of SMARCA5/SNF2H and BAZ1B/WSTF, which regulates the spacing of histone octamers on the DNA template to facilitate access to DNA. Within the WICH-5 ISWI chromatin remodeling complex interacts with SMARCA5/SNF2H; the interaction is direct. Component of the B-WICH chromatin remodeling complex, at least composed of SMARCA5/SNF2H, BAZ1B/WSTF, SF3B1, DEK, MYO1C, ERCC6, MYBBP1A and DDX21. Within the B-WICH chromatin remodeling complex, interacts with SMARCA5/SNF2H, DDX21, DEK, MYBBP1A, SF3B1 and ERCC6. Interacts with MYO1C. Interacts with PCNA; the interaction is direct and is required for BAZ1B/WSTF binding to replication foci during S phase. Interacts with CDT1. Mn(2+) serves as cofactor.

The protein resides in the nucleus. It catalyses the reaction L-tyrosyl-[protein] + ATP = O-phospho-L-tyrosyl-[protein] + ADP + H(+). Its function is as follows. Atypical tyrosine-protein kinase that plays a central role in chromatin remodeling and acts as a transcription regulator. Involved in DNA damage response by phosphorylating 'Tyr-142' of histone H2AX (H2AXY142ph). H2AXY142ph plays a central role in DNA repair and acts as a mark that distinguishes between apoptotic and repair responses to genotoxic stress. Regulatory subunit of the ATP-dependent WICH-1 and WICH-5 ISWI chromatin remodeling complexes, which form ordered nucleosome arrays on chromatin and facilitate access to DNA during DNA-templated processes such as DNA replication, transcription, and repair. Both complexes regulate the spacing of nucleosomes along the chromatin and have the ability to slide mononucleosomes to the center of a DNA template. The WICH-1 ISWI chromatin remodeling complex has a lower ATP hydrolysis rate than the WICH-5 ISWI chromatin remodeling complex. The WICH-5 ISWI chromatin remodeling complex regulates the transcription of various genes, has a role in RNA polymerase I transcription. Within the B-WICH complex has a role in RNA polymerase III transcription. Mediates the recruitment of the WICH-5 ISWI chromatin remodeling complex to replication foci during DNA replication. The protein is Tyrosine-protein kinase BAZ1B (Baz1b) of Mus musculus (Mouse).